The chain runs to 346 residues: 2-oxoglutarate synthase subunit KorA (346 aa).

Heterotetramer of the KorA, KorB, KorC and KorD subunits.

The enzyme catalyses 2 oxidized [2Fe-2S]-[ferredoxin] + 2-oxoglutarate + CoA = succinyl-CoA + 2 reduced [2Fe-2S]-[ferredoxin] + CO2 + H(+). The polypeptide is 2-oxoglutarate synthase subunit KorA (korA) (Archaeoglobus fulgidus (strain ATCC 49558 / DSM 4304 / JCM 9628 / NBRC 100126 / VC-16)).